Reading from the N-terminus, the 1411-residue chain is DNA-directed RNA polymerase subunit beta' (1411 aa).

Zn(2+) contacts are provided by Cys-70, Cys-72, Cys-85, and Cys-88. Asp-458, Asp-460, and Asp-462 together coordinate Mg(2+). Zn(2+) contacts are provided by Cys-813, Cys-887, Cys-894, and Cys-897. The interval 1391–1411 is disordered; it reads AQAEVPELDGSSVTASDAAAD.

It belongs to the RNA polymerase beta' chain family. The RNAP catalytic core consists of 2 alpha, 1 beta, 1 beta' and 1 omega subunit. When a sigma factor is associated with the core the holoenzyme is formed, which can initiate transcription. Requires Mg(2+) as cofactor. The cofactor is Zn(2+).

The catalysed reaction is RNA(n) + a ribonucleoside 5'-triphosphate = RNA(n+1) + diphosphate. In terms of biological role, DNA-dependent RNA polymerase catalyzes the transcription of DNA into RNA using the four ribonucleoside triphosphates as substrates. The polypeptide is DNA-directed RNA polymerase subunit beta' (Verminephrobacter eiseniae (strain EF01-2)).